The chain runs to 188 residues: U1 small nuclear ribonucleoprotein C-2 (188 aa).

The segment at 4–36 adopts a Matrin-type zinc-finger fold; sequence YYCDYCDVFLVSESPSVRKAHNSGRNHLTNVRD. A disordered region spans residues 57–188; the sequence is FETGGGNSTS…MNPDRARQLG (132 aa). Over residues 72–82 the composition is skewed to pro residues; sequence GNPPGSQPGPP. Low complexity predominate over residues 109–124; sequence AMLALMNGQNGMSSPG. Over residues 125 to 141 the composition is skewed to pro residues; sequence SGPPPMRFAGPPIPNNM.

Belongs to the U1 small nuclear ribonucleoprotein C family. As to quaternary structure, U1 snRNP is composed of the 7 core Sm proteins B/B', D1, D2, D3, E, F and G that assemble in a heptameric protein ring on the Sm site of the small nuclear RNA to form the core snRNP, and at least 3 U1 snRNP-specific proteins U1-70K, U1-A and U1-C. U1-C interacts with U1 snRNA and the 5' splice-site region of the pre-mRNA.

The protein localises to the nucleus. Functionally, component of the spliceosomal U1 snRNP, which is essential for recognition of the pre-mRNA 5' splice-site and the subsequent assembly of the spliceosome. U1-C is directly involved in initial 5' splice-site recognition for both constitutive and regulated alternative splicing. The interaction with the 5' splice-site seems to precede base-pairing between the pre-mRNA and the U1 snRNA. Stimulates commitment or early (E) complex formation by stabilizing the base pairing of the 5' end of the U1 snRNA and the 5' splice-site region. The polypeptide is U1 small nuclear ribonucleoprotein C-2 (Puccinia graminis f. sp. tritici (strain CRL 75-36-700-3 / race SCCL) (Black stem rust fungus)).